The following is a 429-amino-acid chain: Histidine--tRNA ligase (429 aa).

Belongs to the class-II aminoacyl-tRNA synthetase family. As to quaternary structure, homodimer.

The protein resides in the cytoplasm. The enzyme catalyses tRNA(His) + L-histidine + ATP = L-histidyl-tRNA(His) + AMP + diphosphate + H(+). This chain is Histidine--tRNA ligase, found in Pseudomonas aeruginosa (strain UCBPP-PA14).